Reading from the N-terminus, the 158-residue chain is ABA-responsive protein ABR18 (158 aa).

The protein belongs to the BetVI family.

The protein is ABA-responsive protein ABR18 of Pisum sativum (Garden pea).